Here is a 252-residue protein sequence, read N- to C-terminus: 3-deoxy-manno-octulosonate cytidylyltransferase (252 aa).

The protein belongs to the KdsB family.

Its subcellular location is the cytoplasm. The enzyme catalyses 3-deoxy-alpha-D-manno-oct-2-ulosonate + CTP = CMP-3-deoxy-beta-D-manno-octulosonate + diphosphate. It participates in nucleotide-sugar biosynthesis; CMP-3-deoxy-D-manno-octulosonate biosynthesis; CMP-3-deoxy-D-manno-octulosonate from 3-deoxy-D-manno-octulosonate and CTP: step 1/1. Its pathway is bacterial outer membrane biogenesis; lipopolysaccharide biosynthesis. Its function is as follows. Activates KDO (a required 8-carbon sugar) for incorporation into bacterial lipopolysaccharide in Gram-negative bacteria. This chain is 3-deoxy-manno-octulosonate cytidylyltransferase, found in Solibacter usitatus (strain Ellin6076).